Reading from the N-terminus, the 83-residue chain is Large ribosomal subunit protein bL27 (83 aa).

Belongs to the bacterial ribosomal protein bL27 family.

This chain is Large ribosomal subunit protein bL27 (rpmA), found in Thermotoga maritima (strain ATCC 43589 / DSM 3109 / JCM 10099 / NBRC 100826 / MSB8).